A 174-amino-acid polypeptide reads, in one-letter code: Crossover junction endodeoxyribonuclease RuvC (174 aa).

Catalysis depends on residues Asp8, Glu67, and Asp139. 3 residues coordinate Mg(2+): Asp8, Glu67, and Asp139.

The protein belongs to the RuvC family. As to quaternary structure, homodimer which binds Holliday junction (HJ) DNA. The HJ becomes 2-fold symmetrical on binding to RuvC with unstacked arms; it has a different conformation from HJ DNA in complex with RuvA. In the full resolvosome a probable DNA-RuvA(4)-RuvB(12)-RuvC(2) complex forms which resolves the HJ. Requires Mg(2+) as cofactor.

The protein localises to the cytoplasm. The enzyme catalyses Endonucleolytic cleavage at a junction such as a reciprocal single-stranded crossover between two homologous DNA duplexes (Holliday junction).. The RuvA-RuvB-RuvC complex processes Holliday junction (HJ) DNA during genetic recombination and DNA repair. Endonuclease that resolves HJ intermediates. Cleaves cruciform DNA by making single-stranded nicks across the HJ at symmetrical positions within the homologous arms, yielding a 5'-phosphate and a 3'-hydroxyl group; requires a central core of homology in the junction. The consensus cleavage sequence is 5'-(A/T)TT(C/G)-3'. Cleavage occurs on the 3'-side of the TT dinucleotide at the point of strand exchange. HJ branch migration catalyzed by RuvA-RuvB allows RuvC to scan DNA until it finds its consensus sequence, where it cleaves and resolves the cruciform DNA. In Pseudomonas putida (strain GB-1), this protein is Crossover junction endodeoxyribonuclease RuvC.